A 668-amino-acid polypeptide reads, in one-letter code: tRNA 5-methylaminomethyl-2-thiouridine biosynthesis bifunctional protein MnmC (668 aa).

The tract at residues 1-245 is tRNA (mnm(5)s(2)U34)-methyltransferase; the sequence is MKHYSIQPAN…KREMLCGVME (245 aa). Positions 270-668 are FAD-dependent cmnm(5)s(2)U34 oxidoreductase; sequence IGGGIASALL…LLKGKAVKAG (399 aa).

This sequence in the N-terminal section; belongs to the methyltransferase superfamily. tRNA (mnm(5)s(2)U34)-methyltransferase family. In the C-terminal section; belongs to the DAO family. It depends on FAD as a cofactor.

The protein resides in the cytoplasm. It catalyses the reaction 5-aminomethyl-2-thiouridine(34) in tRNA + S-adenosyl-L-methionine = 5-methylaminomethyl-2-thiouridine(34) in tRNA + S-adenosyl-L-homocysteine + H(+). In terms of biological role, catalyzes the last two steps in the biosynthesis of 5-methylaminomethyl-2-thiouridine (mnm(5)s(2)U) at the wobble position (U34) in tRNA. Catalyzes the FAD-dependent demodification of cmnm(5)s(2)U34 to nm(5)s(2)U34, followed by the transfer of a methyl group from S-adenosyl-L-methionine to nm(5)s(2)U34, to form mnm(5)s(2)U34. In Escherichia coli O9:H4 (strain HS), this protein is tRNA 5-methylaminomethyl-2-thiouridine biosynthesis bifunctional protein MnmC.